The chain runs to 347 residues: Guanine nucleotide-binding protein alpha-5 subunit (347 aa).

Residue G2 is the site of N-myristoyl glycine attachment. C3 is lipidated: S-palmitoyl cysteine. A G-alpha domain is found at 27–347 (NETKLLLLGP…KNIFNTIINY (321 aa)). The tract at residues 30–43 (KLLLLGPGESGKST) is G1 motif. GTP contacts are provided by residues 35-42 (GPGESGKS), 170-176 (LRSRVRT), 195-199 (DVGGQ), 264-267 (NKVD), and A319. Mg(2+) contacts are provided by S42 and T176. Positions 168 to 176 (DVLRSRVRT) are G2 motif. Positions 191 to 200 (FRMLDVGGQR) are G3 motif. A G4 motif region spans residues 260–267 (IIFFNKVD). A G5 motif region spans residues 317–322 (TCAIDT).

This sequence belongs to the G-alpha family. G(q) subfamily. As to quaternary structure, g proteins are composed of 3 units; alpha, beta and gamma. The alpha chain contains the guanine nucleotide binding site.

In terms of biological role, guanine nucleotide-binding proteins (G proteins) are involved as modulators or transducers in various transmembrane signaling systems. The chain is Guanine nucleotide-binding protein alpha-5 subunit (gpaE) from Dictyostelium discoideum (Social amoeba).